The following is an 816-amino-acid chain: Mitogen-activated protein kinase 7 (816 aa).

Residues 1–26 (MAEPLKEEDGEDGSAEPPGPVKAEPA) are disordered. At Ala2 the chain carries N-acetylalanine. Positions 2–77 (AEPLKEEDGE…VVSSARRRLT (76 aa)) are required for cytoplasmic targeting. The Protein kinase domain maps to 55 to 347 (YEIIETIGNG…AAAALRHPFL (293 aa)). Residues 61–69 (IGNGAYGVV) and Lys84 contribute to the ATP site. The interval 78-139 (GQQVAIKKIP…FKSVYVVLDL (62 aa)) is required for binding to MAP2K5. The interval 140–406 (MESDLHQIIH…QQIRFQPSLQ (267 aa)) is necessary for oligomerization. Asp182 serves as the catalytic Proton acceptor. The TXY motif lies at 219–221 (TEY). Positions 406-737 (QPVASEPGCP…PVFSGTPKGS (332 aa)) are disordered. Positions 407–806 (PVASEPGCPD…REIQMDSPML (400 aa)) are may not be required for kinase activity; required to stimulate MEF2C activity. Composition is skewed to pro residues over residues 433–445 (SPPP…PGPA) and 454–463 (QPPPPVSEPA). Positions 476 to 486 (KAALKAALLKS) are enriched in low complexity. Basic and acidic residues-rich tracts occupy residues 502–519 (PEPR…EREE), 527–544 (RAKE…KERG), and 563–573 (DNDRSLLERWT). The short motif at 505–539 (RKPVTAQERQREREEKRRRRQERAKEREKRRQERE) is the Nuclear localization signal element. Low complexity predominate over residues 578–587 (PAAPALTSVP). Composition is skewed to pro residues over residues 588–610 (APAP…PGPV) and 628–655 (VPQP…PAPP). Over residues 676-685 (PGSSTPGVLP) the composition is skewed to low complexity. A compositionally biased stretch (pro residues) spans 686-695 (YFPPGLPPPD). Over residues 701–720 (QSSMSESPDVNLVTQQLSKS) the composition is skewed to polar residues. Ser720 is modified (phosphoserine). A Phosphothreonine modification is found at Thr733.

Belongs to the protein kinase superfamily. CMGC Ser/Thr protein kinase family. MAP kinase subfamily. Interacts with MAP2K5. Forms oligomers. Interacts with MEF2A, MEF2C and MEF2D; the interaction phosphorylates the MEF2s and enhances transcriptional activity of MEF2A, MEF2C but not MEF2D. Interacts with SGK1. Preferentially interacts with PML isoform PML-4 but shows interaction also with its other isoforms: isoform PML-1, isoform PML-2, isoform PML-3 and isoform PML-6. Interacts (via N-terminal half) with HSP90AB1-CDC37 chaperone complex in resting cells; the interaction is MAP2K5-independent and prevents MAPK7 from ubiquitination and proteasomal degradation. Interacts with STUB1/CHIP; the interaction is enhanced in the presence of IGF1 or MAP2K5 and promotes STUB1/CHIP E3 ligase activity. Mg(2+) is required as a cofactor. In terms of processing, dually phosphorylated on Thr-219 and Tyr-221, which activates the enzyme. Autophosphorylated in vitro on threonine and tyrosine residues when the C-terminal part of the kinase, which could have a regulatory role, is absent. Expressed in many adult tissues. Abundant in heart, placenta, lung, kidney and skeletal muscle. Not detectable in liver.

Its subcellular location is the cytoplasm. It localises to the nucleus. The protein localises to the PML body. The catalysed reaction is L-seryl-[protein] + ATP = O-phospho-L-seryl-[protein] + ADP + H(+). It carries out the reaction L-threonyl-[protein] + ATP = O-phospho-L-threonyl-[protein] + ADP + H(+). Activated by tyrosine and threonine phosphorylation. Activated in response to hyperosmolarity, hydrogen peroxide, and epidermal growth factor (EGF). Its function is as follows. Plays a role in various cellular processes such as proliferation, differentiation and cell survival. The upstream activator of MAPK7 is the MAPK kinase MAP2K5. Upon activation, it translocates to the nucleus and phosphorylates various downstream targets including MEF2C. EGF activates MAPK7 through a Ras-independent and MAP2K5-dependent pathway. As part of the MAPK/ERK signaling pathway, acts as a negative regulator of apoptosis in cardiomyocytes via interaction with STUB1/CHIP and promotion of STUB1-mediated ubiquitination and degradation of ICER-type isoforms of CREM. May have a role in muscle cell differentiation. May be important for endothelial function and maintenance of blood vessel integrity. MAP2K5 and MAPK7 interact specifically with one another and not with MEK1/ERK1 or MEK2/ERK2 pathways. Phosphorylates SGK1 at Ser-78 and this is required for growth factor-induced cell cycle progression. Involved in the regulation of p53/TP53 by disrupting the PML-MDM2 interaction. The polypeptide is Mitogen-activated protein kinase 7 (MAPK7) (Homo sapiens (Human)).